The chain runs to 570 residues: MDPSSDYHFLNQILWRRVKLTLVSGIFEGVLQHVDPNKIVVLKNVRNAESGRSVPGVKVFFGHEILNVELMDEAEGASGEKASAVSINTERAGMEKVKNEDVNVCEPASPAPEVPTSSLLSDLKYCPSEEEEVTYTVIDQFQQKFGAAMLHIKKQSVLSVAAEGANVCRHGKLCWLQVATNSRVYLFDIFLLGSRAFNNGLQMILEDKRILKVIHDCRWLSDCLSHQYGIMLNNVFDTQVADVLQFSMETGGFLPNCISTLQESLIRHLKVAPRYLFFLEERQKRIQENPEIWLTRPLPPSLLKILALETTYLLPLRLVLLDEVMSDLTTLVDGYLNTYREGSADRLAGTEPACMELPAELLQLQDFQKQRRERAVKEYRVNARGLLIRTPLHPKEPTACTAGKEERVQGFLFYKTDGGDQVPRFLCPKSHEDEKFLDKESKQTTAKSQIVPPRKEGEAHKDSKNKPGCWESAGPEDPRAQKAHALPPTWASQSQFSLKEEIEQLTVVGNKGALTSPKEGALVSPSLLQETWEAPTDTFHLPEKAEVSTLPPCPALEKTDSWISPSLNLF.

The region spanning 135–307 is the 3'-5' exonuclease domain; that stretch reads YTVIDQFQQK…LPPSLLKILA (173 aa). 2 stretches are compositionally biased toward basic and acidic residues: residues 433-442 and 453-465; these read DEKFLDKESK and PRKE…DSKN. A disordered region spans residues 433–485; that stretch reads DEKFLDKESKQTTAKSQIVPPRKEGEAHKDSKNKPGCWESAGPEDPRAQKAHA.

Belongs to the EXD1 family. Homodimer. Component of the PET complex, at least composed of EXD1, PIWIL2, TDRD12 and piRNAs.

It is found in the cytoplasm. Its function is as follows. RNA-binding component of the PET complex, a multiprotein complex required for the processing of piRNAs during spermatogenesis. The piRNA metabolic process mediates the repression of transposable elements during meiosis by forming complexes composed of piRNAs and Piwi proteins and governs the methylation and subsequent repression of transposable elements, preventing their mobilization, which is essential for the germline integrity. The PET complex is required during the secondary piRNAs metabolic process for the PIWIL2 slicing-triggered loading of PIWIL4 piRNAs. In the PET complex, EXD1 probably acts as an RNA adapter. EXD1 is an inactive exonuclease. In Mus musculus (Mouse), this protein is piRNA biogenesis protein EXD1 (Exd1).